Reading from the N-terminus, the 559-residue chain is MDIRRTVLWMIFSFSLLLLWNNWQIHNGQPALFGGPSPEQNAPATANNQAATNPASNTPAVPNAPAATSAPSSVPGSTAPAPAQAQEVVITTDVLRLTFSSTGAQIIRAELLKYPATAGSDQPMVLLDRSAGLTYTAQTGVIGAGQNFPTHLTPFAVTTNERELTGDKLVVRFEAESGGLRVIKTFTLDRGSYDVHVRHDVTNVGTAAQHPSVYLQLERDGNDPAGTSSFYHTFTGVAVYSEQDKFQKVTFSDIAKNKASYIKQADNGWIGIVQHYFATAWVPKEGTPRTNDLLQLQPNLFAARAIEALGEVAPGATVSSDAQLWVGPQDQQAMAAVAPGLELVVDYGWLTIIAKPLFTLMTWLHSLLGNWGWTIVALTVIIKAVFYPLASASYRSMARMKQVAPRLQALKEKYGDDRQKLNQAMMEMYRTEKINPLGGCLPMVVQIPVFIALYWVLLASVEMRGAPWILWIHDLSVRDPYFILPAVMMATMFLQIKLNPTPPDPVQAKVMMVMPLVFGGMMFFFPAGLVLYWCVNNTLSILQQWSITRSITRQTAKRG.

The chain crosses the membrane as a helical span at residues 6-26; it reads TVLWMIFSFSLLLLWNNWQIH. The tract at residues 34-80 is disordered; sequence GGPSPEQNAPATANNQAATNPASNTPAVPNAPAATSAPSSVPGSTAP. Residues 42–80 are compositionally biased toward low complexity; the sequence is APATANNQAATNPASNTPAVPNAPAATSAPSSVPGSTAP. A run of 4 helical transmembrane segments spans residues 367-387, 441-461, 480-500, and 510-530; these read LLGN…AVFY, LPMV…LASV, PYFI…KLNP, and VMMV…AGLV.

The protein belongs to the OXA1/ALB3/YidC family. Type 1 subfamily. In terms of assembly, interacts with the Sec translocase complex via SecD. Specifically interacts with transmembrane segments of nascent integral membrane proteins during membrane integration.

Its subcellular location is the cell inner membrane. Functionally, required for the insertion and/or proper folding and/or complex formation of integral membrane proteins into the membrane. Involved in integration of membrane proteins that insert both dependently and independently of the Sec translocase complex, as well as at least some lipoproteins. Aids folding of multispanning membrane proteins. The polypeptide is Membrane protein insertase YidC (Bordetella avium (strain 197N)).